The chain runs to 541 residues: T-complex protein 1 subunit epsilon (541 aa).

N-acetylalanine is present on Ala2. Lys20 participates in a covalent cross-link: Glycyl lysine isopeptide (Lys-Gly) (interchain with G-Cter in SUMO2). Position 26 is a phosphoserine (Ser26). Position 53 (Gly53) interacts with ADP. An ATP-binding site is contributed by Gly53. Residue Asp104 participates in Mg(2+) binding. ADP contacts are provided by Gly105, Thr106, Thr107, and Ser175. Residues Thr106 and Thr107 each contribute to the ATP site. Glycyl lysine isopeptide (Lys-Gly) (interchain with G-Cter in SUMO2) cross-links involve residues Lys210, Lys214, Lys265, Lys275, and Lys279. Ser346 is subject to Phosphoserine. Residue Lys392 forms a Glycyl lysine isopeptide (Lys-Gly) (interchain with G-Cter in SUMO2) linkage. ADP is bound by residues Gly422, Asp492, Glu508, and Lys513. Gly422 contributes to the ATP binding site. At Ser539 the chain carries Phosphoserine.

It belongs to the TCP-1 chaperonin family. In terms of assembly, component of the chaperonin-containing T-complex (TRiC), a hexadecamer composed of two identical back-to-back stacked rings enclosing a protein folding chamber. Each ring is made up of eight different subunits: TCP1/CCT1, CCT2, CCT3, CCT4, CCT5, CCT6A/CCT6, CCT7, CCT8. Interacts with PACRG. Interacts with DNAAF4. Interacts with DLEC1. Interacts with SPMAP2. Post-translationally, ubiquitinated by the DCX(DCAF12) complex specifically recognizes the diglutamate (Glu-Glu) at the C-terminus, leading to its degradation.

It localises to the cytoplasm. It is found in the cytoskeleton. The protein localises to the microtubule organizing center. Its subcellular location is the centrosome. It carries out the reaction ATP + H2O = ADP + phosphate + H(+). In terms of biological role, component of the chaperonin-containing T-complex (TRiC), a molecular chaperone complex that assists the folding of actin, tubulin and other proteins upon ATP hydrolysis. The TRiC complex mediates the folding of WRAP53/TCAB1, thereby regulating telomere maintenance. As part of the TRiC complex may play a role in the assembly of BBSome, a complex involved in ciliogenesis regulating transports vesicles to the cilia. The polypeptide is T-complex protein 1 subunit epsilon (Cct5) (Rattus norvegicus (Rat)).